Consider the following 119-residue polypeptide: Small ribosomal subunit protein bS6 (119 aa).

A disordered region spans residues 95-119; that stretch reads AVTEPSPLAKGNEKREDRKESEDAE. The segment covering 105–119 has biased composition (basic and acidic residues); sequence GNEKREDRKESEDAE.

The protein belongs to the bacterial ribosomal protein bS6 family.

In terms of biological role, binds together with bS18 to 16S ribosomal RNA. The polypeptide is Small ribosomal subunit protein bS6 (Halorhodospira halophila (strain DSM 244 / SL1) (Ectothiorhodospira halophila (strain DSM 244 / SL1))).